We begin with the raw amino-acid sequence, 152 residues long: MARIHARRRGKSGSKRIYRDSPPEWVDMSPEEVEKKVLELYNEGYEPSMIGMILRDRYGIPSVKQVTGKKIQKILKEHGVEIKYPEDLKALIKKALKLRAHLEVHRKDKHNRRGLQLIEAKIWRLSSYYKEKGVLPADWKYNPDRLKIEISK.

A compositionally biased stretch (basic residues) spans 1-16 (MARIHARRRGKSGSKR). The interval 1–21 (MARIHARRRGKSGSKRIYRDS) is disordered.

Belongs to the universal ribosomal protein uS15 family. In terms of assembly, part of the 30S ribosomal subunit.

The sequence is that of Small ribosomal subunit protein uS15 from Archaeoglobus fulgidus (strain ATCC 49558 / DSM 4304 / JCM 9628 / NBRC 100126 / VC-16).